A 76-amino-acid polypeptide reads, in one-letter code: Putative snRNP Sm-like protein (76 aa).

In terms of domain architecture, Sm spans Arg-4 to Gly-76.

This sequence belongs to the snRNP Sm proteins family.

The sequence is that of Putative snRNP Sm-like protein from Pyrococcus furiosus (strain ATCC 43587 / DSM 3638 / JCM 8422 / Vc1).